We begin with the raw amino-acid sequence, 855 residues long: Inactive rhomboid protein 1 (855 aa).

The tract at residues 1-35 is disordered; it reads MSEARRDSTSSLQRKKPPWLKLDIPSAAPATAEEP. Over 1-411 the chain is Cytoplasmic; that stretch reads MSEARRDSTS…HRPFFTYWLT (411 aa). A compositionally biased stretch (low complexity) spans 25 to 35; sequence PSAAPATAEEP. Phosphoserine is present on residues serine 76 and serine 176. Residues threonine 180 and threonine 183 each carry the phosphothreonine modification. Residue serine 390 is modified to Phosphoserine. A helical membrane pass occupies residues 412–432; that stretch reads FVHSLVTILAVCIYGIAPVGF. At 433 to 655 the chain is on the lumenal side; that stretch reads SQHETVDSVL…NPEVPDQFYR (223 aa). The N-linked (GlcNAc...) asparagine glycan is linked to asparagine 583. The chain crosses the membrane as a helical span at residues 656 to 676; it reads LWLSLFLHAGILHCLVSICFQ. The Cytoplasmic portion of the chain corresponds to 677-691; sequence MTVLRDLEKLAGWHR. The helical transmembrane segment at 692–712 threads the bilayer; sequence IAIIYLLSGVTGNLASAIFLP. Topologically, residues 713–714 are lumenal; that stretch reads YR. The helical transmembrane segment at 715 to 735 threads the bilayer; the sequence is AEVGPAGSQFGILACLFVELF. At 736 to 746 the chain is on the cytoplasmic side; it reads QSWQILARPWR. Residues 747 to 767 traverse the membrane as a helical segment; the sequence is AFFKLLAVVLFLFTFGLLPWI. Over 768 to 772 the chain is Lumenal; sequence DNFAH. A helical membrane pass occupies residues 773–793; the sequence is ISGFISGLFLSFAFLPYISFG. At 794–803 the chain is on the cytoplasmic side; it reads KFDLYRKRCQ. The helical transmembrane segment at 804-824 threads the bilayer; the sequence is IIVFQVVFLGLLAGLVVLFYV. Topologically, residues 825–855 are lumenal; it reads YPVRCEWCEFLTCIPFTDKFCEKYELDAQLH.

It belongs to the peptidase S54 family. As to quaternary structure, homodimer, or homooligomer. Interacts with TGFA and HBEGF. Interacts with EGF; may retain EGF in the endoplasmic reticulum and regulates its degradation through the endoplasmic reticulum-associated degradation (ERAD). Interacts (via cytoplasmic N-terminus) with FRMD8/iTAP; this interaction leads to mutual protein stabilization. Interacts with ADAM17/TACE.

It localises to the endoplasmic reticulum membrane. The protein resides in the golgi apparatus membrane. Its function is as follows. Regulates ADAM17 protease, a sheddase of the epidermal growth factor (EGF) receptor ligands and TNF, thereby plays a role in sleep, cell survival, proliferation, migration and inflammation. Does not exhibit any protease activity on its own. The polypeptide is Inactive rhomboid protein 1 (RHBDF1) (Callithrix jacchus (White-tufted-ear marmoset)).